The chain runs to 486 residues: Matrilin-3 (486 aa).

An N-terminal signal peptide occupies residues methionine 1–proline 28. Positions alanine 32–glycine 75 are disordered. Over residues glycine 49 to glycine 64 the composition is skewed to low complexity. The VWFA domain occupies aspartate 83–phenylalanine 258. Arginine 198 is modified (omega-N-methylarginine). EGF-like domains lie at alanine 264–serine 305, alanine 306–serine 347, alanine 348–serine 389, and valine 390–serine 431. Disulfide bonds link cysteine 268-cysteine 279, cysteine 275-cysteine 289, cysteine 291-cysteine 304, cysteine 310-cysteine 321, cysteine 317-cysteine 331, cysteine 333-cysteine 346, cysteine 352-cysteine 363, cysteine 359-cysteine 373, cysteine 375-cysteine 388, cysteine 394-cysteine 405, cysteine 401-cysteine 415, and cysteine 417-cysteine 430. Serine 441 bears the Phosphoserine; by FAM20C mark. A Phosphothreonine; by FAM20C modification is found at threonine 442. Residues aspartate 456–glutamate 480 adopt a coiled-coil conformation.

In terms of assembly, can form homooligomers (monomers, dimers, trimers and tetramers) and heterooligomers with matrilin-1. Interacts with COMP. Component of a complex containing at least CRELD2, MANF, MATN3 and PDIA4. As to expression, expressed only in cartilaginous tissues, such as vertebrae, ribs and shoulders.

Its subcellular location is the secreted. Functionally, major component of the extracellular matrix of cartilage and may play a role in the formation of extracellular filamentous networks. This is Matrilin-3 (MATN3) from Homo sapiens (Human).